The sequence spans 182 residues: MKLADVEERMQKSVEATQHDFNSIRTGRANAALLDRVMVDYYGTETPLRSLANVSTPDATTILIQPYDRSTLASIEKAIQLSDLGLTPNNDGSSVRLNIPPLTTERRKELVKTAAKIAEGGKVAIRNIRRDAIDHIKKAGKAGELTEDEVKDLQEKVQKLTDKYIGKIDALLAEKEKDIMTV.

This sequence belongs to the RRF family.

The protein localises to the cytoplasm. In terms of biological role, responsible for the release of ribosomes from messenger RNA at the termination of protein biosynthesis. May increase the efficiency of translation by recycling ribosomes from one round of translation to another. This Thermosynechococcus vestitus (strain NIES-2133 / IAM M-273 / BP-1) protein is Ribosome-recycling factor.